The following is a 420-amino-acid chain: MIOREX complex component 9 (420 aa).

Helical transmembrane passes span 125-145 and 149-169; these read VYKV…TFIL and IVVI…FFFF.

Associates with the mitochondrial ribosome.

The protein resides in the mitochondrion. It localises to the mitochondrion membrane. Component of MIOREX complexes, large expressome-like assemblies of ribosomes with factors involved in all the steps of post-transcriptional gene expression. This Saccharomyces cerevisiae (strain ATCC 204508 / S288c) (Baker's yeast) protein is MIOREX complex component 9.